The chain runs to 530 residues: AA9 family lytic polysaccharide monooxygenase C (530 aa).

The first 18 residues, 1-18, serve as a signal peptide directing secretion; that stretch reads MQLKSTVHFLSLLAYTAA. Cu(2+) contacts are provided by His19 and His103. 2 cysteine pairs are disulfide-bonded: Cys72–Cys190 and Cys114–Cys118. Asn150 is a glycosylation site (N-linked (GlcNAc...) asparagine). Gln185 lines the O2 pocket. Cu(2+) is bound at residue Tyr187. A compositionally biased stretch (low complexity) spans 238–251; sequence YGSGSSSSQNSVES. Disordered stretches follow at residues 238 to 279, 297 to 329, 348 to 375, and 492 to 512; these read YGSG…STSA, ESSS…SSSA, YSSA…KLSS, and GNGA…GTTP. Positions 312 to 324 are enriched in basic and acidic residues; it reads KSVEAKETTKVEE. Positions 348–368 are enriched in low complexity; sequence YSSASPSSSPVLSSSKPASTS.

Belongs to the polysaccharide monooxygenase AA9 family. Requires Cu(2+) as cofactor.

The protein resides in the secreted. It catalyses the reaction [(1-&gt;4)-beta-D-glucosyl]n+m + reduced acceptor + O2 = 4-dehydro-beta-D-glucosyl-[(1-&gt;4)-beta-D-glucosyl]n-1 + [(1-&gt;4)-beta-D-glucosyl]m + acceptor + H2O.. In terms of biological role, lytic polysaccharide monooxygenase (LPMO) that depolymerizes polysaccharides via the oxidation of scissile alpha- or beta-(1-4)-glycosidic bonds, yielding C1 or C4 oxidation products. Catalysis by LPMOs requires the reduction of the active-site copper from Cu(II) to Cu(I) by a reducing agent and H(2)O(2) or O(2) as a cosubstrate. Amorphous cellulose is not a suitable substrate for LPMO9C, which may act at the surface of cellulose microfibrils without any release of soluble products. This chain is AA9 family lytic polysaccharide monooxygenase C, found in Geotrichum candidum (Oospora lactis).